The primary structure comprises 343 residues: MKKKVAILFGGQSTEHEVSRVSAASVLRNIDTSKYDLFPIGITKKGEWFEYTGSADKIENGEWEKDEFYKSPNGQAILFNKEVDVVFPVMHGLYGEDGTIQGLCKLVGVPCVGPSVLSSSVCMDKVYTKYVLEHFNIKQADYVVVHAHEYKTSKEEIIKEIENKLGYAVFIKPSNSGSSVGITKAHNRKELEAGLEEAMKYDRKILVEEALNAREIEVAVLGNEEPKAAIPGEIVPAKEFYDYEAKYENAASKLLIPANLSNENLEKIKNIAIEVYKALDCSGMSRVDFLVDKDTTEMYLNEVNTIPGFTSISMYPKLWAAAGKDYSKLIDELIELAASRNNA.

Residues 129–335 form the ATP-grasp domain; it reads KYVLEHFNIK…YSKLIDELIE (207 aa). ATP is bound at residue 162–217; it reads ENKLGYAVFIKPSNSGSSVGITKAHNRKELEAGLEEAMKYDRKILVEEALNAREIE. Residues D288, E302, and N304 each coordinate Mg(2+).

The protein belongs to the D-alanine--D-alanine ligase family. It depends on Mg(2+) as a cofactor. Mn(2+) serves as cofactor.

The protein resides in the cytoplasm. The catalysed reaction is 2 D-alanine + ATP = D-alanyl-D-alanine + ADP + phosphate + H(+). It participates in cell wall biogenesis; peptidoglycan biosynthesis. Functionally, cell wall formation. This is D-alanine--D-alanine ligase from Clostridium acetobutylicum (strain ATCC 824 / DSM 792 / JCM 1419 / IAM 19013 / LMG 5710 / NBRC 13948 / NRRL B-527 / VKM B-1787 / 2291 / W).